We begin with the raw amino-acid sequence, 137 residues long: uncharacterized protein (137 aa).

This sequence belongs to the ycf72 family.

The protein resides in the plastid. It localises to the chloroplast. This is an uncharacterized protein from Oryza nivara (Indian wild rice).